Reading from the N-terminus, the 207-residue chain is Ras-related protein Rab-8A (207 aa).

The GTP site is built by Ser-17, Gly-18, Val-19, Gly-20, Lys-21, Thr-22, Cys-23, Ser-35, Ser-39, and Thr-40. Residue Thr-22 participates in Mg(2+) binding. 2 short sequence motifs (switch) span residues 31 to 45 (DAFN…GIDF) and 63 to 80 (DTAG…YYRG). Positions 40 and 63 each coordinate Mg(2+). A GTP-binding site is contributed by Gly-66. Thr-72 is modified (phosphothreonine). Positions 121, 122, 124, 152, and 153 each coordinate GTP. Residues Ser-181 and Ser-185 each carry the phosphoserine modification. Cys-204 carries the post-translational modification Cysteine methyl ester. Cys-204 carries the S-geranylgeranyl cysteine lipid modification. Positions 205-207 (VLL) are cleaved as a propeptide — removed in mature form.

This sequence belongs to the small GTPase superfamily. Rab family. In terms of assembly, interacts (GTP-bound form) with MICALL1; regulates RAB8A association with recycling endosomes. Interacts with MICALL2; competes with RAB13 and is involved in E-cadherin endocytic recycling. Interacts (GTP-bound form) with MICAL1, MICALCL, MICAL3, EHBP1 and EHBP1L1; at least in case of MICAL1, MICALCL, MICAL3 and EHBP1L1 two molecules of RAB8A can bind to one molecule of the effector protein; ternary complexes of RAB8A, RAB13 and either MICAL1 or EHBP1L1 are possible. Interacts with EHD1. Interacts with MAP4K2 and SYTL4. Interacts with SGSM1 and SGSM3. Interacts with RABIF, RIMS2, RPH3A and RPH3A. Interacts with OPTN. Interacts with RAB3IP, RAB3IP functions as guanine exchange factor (GEF). Interacts with MYO5B. Interacts with CIMAP3. Interacts with BIRC6/bruce. Interacts with OCRL. Interacts with AHI1. Interacts with DCDC1. Interacts with LRRK2; interaction facilitates phosphorylation of Thr-72. Interacts with RAB31P, GDI1, GDI2, CHM, CHML, RABGGTA, RABGGTB, TBC1D15 and INPP5B; these interactions are dependent on Thr-72 not being phosphorylated. Interacts with RILPL1 and RILPL2; these interactions are dependent on the phosphorylation of Thr-72 by LRRK2. Interacts with DZIP1; prevents inhibition by the GDP-dissociation inhibitor GDI2. Interacts (in GDP-bound form) with RAB3IP/Rabin8, RAB3IP functions as guanine exchange factor (GEF) towards RAB8A. Interacts (in GDP-bound form) with RPGR, RPGR functions as GEF towards RAB8A. The cofactor is Mg(2+). Phosphorylation of Thr-72 in the switch II region by LRRK2 prevents the association of RAB regulatory proteins, including CHM, CHML and RAB GDP dissociation inhibitors GDI1 and GDI2. Phosphorylation by LRRK2 is required for localization to stressed lysosomes.

Its subcellular location is the cell membrane. The protein localises to the golgi apparatus. It is found in the endosome membrane. It localises to the recycling endosome membrane. The protein resides in the cell projection. Its subcellular location is the cilium. The protein localises to the cytoplasmic vesicle. It is found in the phagosome membrane. It localises to the cytoplasm. The protein resides in the cytoskeleton. Its subcellular location is the microtubule organizing center. The protein localises to the centrosome. It is found in the centriole. It localises to the cilium basal body. The protein resides in the midbody. Its subcellular location is the lysosome. It carries out the reaction GTP + H2O = GDP + phosphate + H(+). With respect to regulation, regulated by guanine nucleotide exchange factors (GEFs) such as RAB3IP/Rabin8 and RPGR which promote the exchange of bound GDP for free GTP, GTPase activating proteins (GAPs) which increase the GTP hydrolysis activity, and GDP dissociation inhibitors (GDIs) which inhibit the dissociation of the nucleotide from the GTPase. Activated in response to insulin. In terms of biological role, the small GTPases Rab are key regulators of intracellular membrane trafficking, from the formation of transport vesicles to their fusion with membranes. Rabs cycle between an inactive GDP-bound form and an active GTP-bound form that is able to recruit to membranes different sets of downstream effectors directly responsible for vesicle formation, movement, tethering and fusion. RAB8A is involved in polarized vesicular trafficking and neurotransmitter release. Together with RAB11A, RAB3IP, the exocyst complex, PARD3, PRKCI, ANXA2, CDC42 and DNMBP promotes transcytosis of PODXL to the apical membrane initiation sites (AMIS), apical surface formation and lumenogenesis. Regulates the compacted morphology of the Golgi. Together with MYO5B and RAB11A participates in epithelial cell polarization. Also involved in membrane trafficking to the cilium and ciliogenesis. Together with MICALL2, may also regulate adherens junction assembly. May play a role in insulin-induced transport to the plasma membrane of the glucose transporter GLUT4 and therefore play a role in glucose homeostasis. Involved in autophagy. Participates in the export of a subset of neosynthesized proteins through a Rab8-Rab10-Rab11-dependent endososomal export route. Targeted to and stabilized on stressed lysosomes through LRRK2 phosphorylation. Suppresses stress-induced lysosomal enlargement through EHBP1 and EHNP1L1 effector proteins. This Bos taurus (Bovine) protein is Ras-related protein Rab-8A (RAB8A).